The sequence spans 71 residues: NAD(P)H-quinone oxidoreductase subunit O (71 aa).

Belongs to the complex I NdhO subunit family. As to quaternary structure, NDH-1 can be composed of about 15 different subunits; different subcomplexes with different compositions have been identified which probably have different functions.

The protein resides in the cellular thylakoid membrane. It carries out the reaction a plastoquinone + NADH + (n+1) H(+)(in) = a plastoquinol + NAD(+) + n H(+)(out). The catalysed reaction is a plastoquinone + NADPH + (n+1) H(+)(in) = a plastoquinol + NADP(+) + n H(+)(out). NDH-1 shuttles electrons from an unknown electron donor, via FMN and iron-sulfur (Fe-S) centers, to quinones in the respiratory and/or the photosynthetic chain. The immediate electron acceptor for the enzyme in this species is believed to be plastoquinone. Couples the redox reaction to proton translocation, and thus conserves the redox energy in a proton gradient. Cyanobacterial NDH-1 also plays a role in inorganic carbon-concentration. The polypeptide is NAD(P)H-quinone oxidoreductase subunit O (Microcystis aeruginosa (strain NIES-843 / IAM M-2473)).